We begin with the raw amino-acid sequence, 477 residues long: Peroxisome proliferator-activated receptor gamma (477 aa).

A Phosphoserine; by MAPK modification is found at serine 87. Residues 110 to 184 constitute a DNA-binding region (nuclear receptor); that stretch reads AIECRVCGDK…VGMSHNAIRF (75 aa). 2 consecutive NR C4-type zinc fingers follow at residues 113–133 and 150–172; these read CRVC…CEGC and CDLN…FQKC. The segment at 231-281 is disordered; that stretch reads TKAKAPGHPDGQSHRQNSRGYTRHELADDGGGSDQGAVREPRAEQGGGDSN. The region spanning 252-475 is the NR LBD domain; the sequence is TRHELADDGG…HPLLQEIYKD (224 aa). The 9aaTAD signature appears at 467 to 475; the sequence is PLLQEIYKD.

The protein belongs to the nuclear hormone receptor family. NR1 subfamily. In terms of assembly, heterodimer with the retinoid X receptor. As to expression, expressed mainly in adipose tissue and kidney.

Its subcellular location is the nucleus. It is found in the cytoplasm. Receptor that binds peroxisome proliferators such as hypolipidemic drugs and fatty acids. Once activated by a ligand, the receptor binds to a promoter element in the gene for acyl-CoA oxidase and activates its transcription. It therefore controls the peroxisomal beta-oxidation pathway of fatty acids. Key regulator of adipocyte differentiation and glucose homeostasis. May play a role in the regulation of circadian rhythm. The protein is Peroxisome proliferator-activated receptor gamma (pparg) of Xenopus laevis (African clawed frog).